A 137-amino-acid chain; its full sequence is S-protein homolog 16 (137 aa).

Positions 1–21 (MKNLLVFIFVFSLCMFDHVSG) are cleaved as a signal peptide. N-linked (GlcNAc...) asparagine glycosylation occurs at Asn87.

It belongs to the plant self-incompatibility (S1) protein family.

It is found in the secreted. In Arabidopsis thaliana (Mouse-ear cress), this protein is S-protein homolog 16.